Consider the following 325-residue polypeptide: Foldase protein PrsA (325 aa).

Residues 1-20 (MKLMNKIIVPVTASALLLGA) form the signal peptide. Cys21 carries N-palmitoyl cysteine lipidation. Cys21 is lipidated: S-diacylglycerol cysteine. The 107-residue stretch at 139-245 (ENSKKTSHIL…YGYHIIKADK (107 aa)) folds into the PpiC domain. 2 disordered regions span residues 159–200 (EGLS…SAKK) and 303–325 (PDKI…NSGS).

The protein belongs to the PrsA family.

Its subcellular location is the cell membrane. The enzyme catalyses [protein]-peptidylproline (omega=180) = [protein]-peptidylproline (omega=0). Its function is as follows. Plays a major role in protein secretion by helping the post-translocational extracellular folding of several secreted proteins. The protein is Foldase protein PrsA of Staphylococcus epidermidis (strain ATCC 35984 / DSM 28319 / BCRC 17069 / CCUG 31568 / BM 3577 / RP62A).